We begin with the raw amino-acid sequence, 373 residues long: Molybdenum import ATP-binding protein ModC (373 aa).

One can recognise an ABC transporter domain in the interval 4 to 240 (LTPPTIRAAF…PKLPLAIARD (237 aa)). 38–45 (GPSGCGKS) contributes to the ATP binding site. The 71-residue stretch at 299 to 369 (ASSILNAIAA…IKGVALAPGR (71 aa)) folds into the Mop domain.

This sequence belongs to the ABC transporter superfamily. Molybdate importer (TC 3.A.1.8) family. In terms of assembly, the complex is composed of two ATP-binding proteins (ModC), two transmembrane proteins (ModB) and a solute-binding protein (ModA).

The protein localises to the cell inner membrane. It catalyses the reaction molybdate(out) + ATP + H2O = molybdate(in) + ADP + phosphate + H(+). Part of the ABC transporter complex ModABC involved in molybdenum import. Responsible for energy coupling to the transport system. This chain is Molybdenum import ATP-binding protein ModC, found in Rhodopseudomonas palustris (strain ATCC BAA-98 / CGA009).